Reading from the N-terminus, the 130-residue chain is Small ribosomal subunit protein uS8 (130 aa).

It belongs to the universal ribosomal protein uS8 family. In terms of assembly, part of the 30S ribosomal subunit. Contacts proteins S5 and S12.

Functionally, one of the primary rRNA binding proteins, it binds directly to 16S rRNA central domain where it helps coordinate assembly of the platform of the 30S subunit. The sequence is that of Small ribosomal subunit protein uS8 from Alteromonas mediterranea (strain DSM 17117 / CIP 110805 / LMG 28347 / Deep ecotype).